The chain runs to 993 residues: P3N-PIPO polyprotein (993 aa).

One can recognise a Peptidase S30 domain in the interval Gly154–Tyr298. Residues His207, Asp216, and Ser249 each act as for P1 proteinase activity in the active site. The Involved in interaction with stylet and aphid transmission motif lies at Lys349–Cys352. The Involved in virions binding and aphid transmission signature appears at Pro607–Lys609. The 123-residue stretch at Met633–Gly755 folds into the Peptidase C6 domain. Active-site for helper component proteinase activity residues include Cys641 and His714.

Belongs to the potyviridae P3N-PIPO polyprotein family. As to quaternary structure, interacts (via PIPO domain) with host PCaP1 protein; this interaction may help to anchor the movement complex to the plasma membrane from which the complex could move to the plasmodesmata. In terms of processing, potyviral RNA is expressed as two polyproteins which undergo post-translational proteolytic processing. Genome polyprotein is processed by NIa-pro, P1 and HC-pro proteinases resulting in the production of at least ten individual proteins. P3N-PIPO is cleaved by P1 and HC-pro proteinases resulting in the production of three individual proteins. The P1 proteinase and the HC-pro cleave only their respective C-termini autocatalytically.

It localises to the host cell junction. The protein localises to the host plasmodesma. It carries out the reaction Hydrolyzes a Gly-|-Gly bond at its own C-terminus, commonly in the sequence -Tyr-Xaa-Val-Gly-|-Gly, in the processing of the potyviral polyprotein.. Required for aphid transmission and also has proteolytic activity. Only cleaves a Gly-Gly dipeptide at its own C-terminus. Interacts with virions and aphid stylets. Acts as a suppressor of RNA-mediated gene silencing, also known as post-transcriptional gene silencing (PTGS), a mechanism of plant viral defense that limits the accumulation of viral RNAs. May have RNA-binding activity. Functionally, allows efficient cell to cell propagation, by bypassing the host cell wall barrier. Transports viral genome to neighboring plant cells directly through plasmosdesmata, without any budding. In Solanum betaceum (Tamarillo), this protein is P3N-PIPO polyprotein.